A 346-amino-acid polypeptide reads, in one-letter code: MAVYAVTGGAGFLGRYIVKLLISADDVQEIRVIDIVEDPQPITSKVKVINYIQCDINDFDKVREALDGVNLIIHTAALVDVFGKYTDNEIMKVNYYGTQTILAACVDLGIKYLIYTSSMEAIGPNKHGDPFIGHEHTLYDISPGHVYAKSKRMAEQLVMKANNSVIMNGAKLYTCCLRPTGIYGEGDKLTKVFYEQCKQHGNIMYRTVDDDAVHSRVYVGNVAWMHVLAAKYIQYPGSEIKGNAYFCYDYSPSCSYDMFNLLLMKPLGIEQGSRIPRWMLKMYACKNDMKRILFRKPSLLNNYTLKISNTTFEVRTNNAELDFNYSPIFNVDVAFERTRKWLEESE.

Residue Tyr-147 is the Proton acceptor of the active site. Lys-151 contacts NAD(+).

It belongs to the 3-beta-HSD family.

The enzyme catalyses a 3beta-hydroxy-Delta(5)-steroid + NAD(+) = a 3-oxo-Delta(5)-steroid + NADH + H(+). It carries out the reaction a 3-oxo-Delta(5)-steroid = a 3-oxo-Delta(4)-steroid. Its pathway is lipid metabolism; steroid biosynthesis. Its function is as follows. Catalyzes the oxidative conversion of Delta(5)-ene-3-beta-hydroxy steroid, and the oxidative conversion of ketosteroids. The 3-beta-HSD enzymatic system plays a crucial role in the biosynthesis of all classes of hormonal steroids. During viral infection, steroid production contributes to virulence by inhibiting the host inflammatory response. This chain is 3 beta-hydroxysteroid dehydrogenase/Delta 5--&gt;4-isomerase (OPG174), found in Vaccinia virus (strain Western Reserve) (VACV).